Consider the following 169-residue polypeptide: MKNMIALTGIGYDIHRFAEVPRPLMLGGVHIPSSRGLDGHSDADVLCHAIADALLGAAGLPDIGYWFPPGDPSCKDIPSLDIVAKAVSLIRERGGRIVNVDSSLIAESPRISPYLEQMKGALGAALGISPVRVGIKATTNEQLGALGRREGIAAFAVAAILMPEDLTMP.

A divalent metal cation-binding residues include D13 and H15. 4-CDP-2-C-methyl-D-erythritol 2-phosphate contacts are provided by residues 13–15 (DIH) and 40–41 (HS). H48 is an a divalent metal cation binding site. Residues 62 to 64 (DIG), 138 to 141 (TTNE), and R148 each bind 4-CDP-2-C-methyl-D-erythritol 2-phosphate.

Belongs to the IspF family. As to quaternary structure, homotrimer. Requires a divalent metal cation as cofactor.

It carries out the reaction 4-CDP-2-C-methyl-D-erythritol 2-phosphate = 2-C-methyl-D-erythritol 2,4-cyclic diphosphate + CMP. It participates in isoprenoid biosynthesis; isopentenyl diphosphate biosynthesis via DXP pathway; isopentenyl diphosphate from 1-deoxy-D-xylulose 5-phosphate: step 4/6. In terms of biological role, involved in the biosynthesis of isopentenyl diphosphate (IPP) and dimethylallyl diphosphate (DMAPP), two major building blocks of isoprenoid compounds. Catalyzes the conversion of 4-diphosphocytidyl-2-C-methyl-D-erythritol 2-phosphate (CDP-ME2P) to 2-C-methyl-D-erythritol 2,4-cyclodiphosphate (ME-CPP) with a corresponding release of cytidine 5-monophosphate (CMP). The polypeptide is 2-C-methyl-D-erythritol 2,4-cyclodiphosphate synthase (Akkermansia muciniphila (strain ATCC BAA-835 / DSM 22959 / JCM 33894 / BCRC 81048 / CCUG 64013 / CIP 107961 / Muc)).